The primary structure comprises 599 residues: ATP-binding cassette sub-family E member 1 (599 aa).

2 consecutive 4Fe-4S ferredoxin-type domains span residues 7 to 37 (RIAIVNHDKCKPKKCRQECKKSCPVVRMGKL) and 46 to 75 (KIAWISETLCIGCGICIKKCPFGALSIVNL). Residue Lys20 forms a Glycyl lysine isopeptide (Lys-Gly) (interchain with G-Cter in ubiquitin) linkage. ABC transporter domains are found at residues 79 to 315 (LEKE…FLDG) and 342 to 562 (VKKM…LSQL). Residues 110-117 (GTNGIGKS) and 379-386 (GENGTGKT) each bind ATP. Ser417 carries the post-translational modification Phosphoserine. Thr550 is subject to Phosphothreonine.

The protein belongs to the ABC transporter superfamily. ABCE family. In terms of assembly, (Microbial infection) Interacts with Chandipura virus matrix protein. As to quaternary structure, interacts with PINK1. Interacts with CNOT4. Interacts with PELO. Probably heterodimerizes with RNASEL; this interaction inhibits RNASEL. (Microbial infection) Interacts with HIV-1 proteins Vif and Gag. In terms of assembly, (Microbial infection) Interacts with HIV-2 protein Gag. Post-translationally, ubiquitinated by CNOT4. Ubiquitination mediates the recruitment of autophagy receptors to the mitochondrial outer membrane and initiates mitophagy.

It localises to the cytoplasm. It is found in the mitochondrion. It catalyses the reaction GTP + H2O = GDP + phosphate + H(+). The enzyme catalyses ATP + H2O = ADP + phosphate + H(+). The catalysed reaction is CTP + H2O = CDP + phosphate + H(+). It carries out the reaction UTP + H2O = UDP + phosphate + H(+). Its function is as follows. Nucleoside-triphosphatase (NTPase) involved in ribosome recycling by mediating ribosome disassembly. Able to hydrolyze ATP, GTP, UTP and CTP. Splits ribosomes into free 60S subunits and tRNA- and mRNA-bound 40S subunits. Acts either after canonical termination facilitated by release factors (ETF1/eRF1) or after recognition of stalled and vacant ribosomes by mRNA surveillance factors (PELO/Pelota). Involved in the No-Go Decay (NGD) pathway: recruited to stalled ribosomes by the Pelota-HBS1L complex, and drives the disassembly of stalled ribosomes, followed by degradation of damaged mRNAs as part of the NGD pathway. Also plays a role in quality control of translation of mitochondrial outer membrane-localized mRNA. As part of the PINK1-regulated signaling, ubiquitinated by CNOT4 upon mitochondria damage; this modification generates polyubiquitin signals that recruit autophagy receptors to the mitochondrial outer membrane and initiate mitophagy. RNASEL-specific protein inhibitor which antagonizes the binding of 2-5A (5'-phosphorylated 2',5'-linked oligoadenylates) to RNASEL. Negative regulator of the anti-viral effect of the interferon-regulated 2-5A/RNASEL pathway. (Microbial infection) May act as a chaperone for post-translational events during HIV-1 capsid assembly. In terms of biological role, (Microbial infection) Plays a role in the down-regulation of the 2-5A/RNASEL pathway during encephalomyocarditis virus (EMCV) and HIV-1 infections. The polypeptide is ATP-binding cassette sub-family E member 1 (ABCE1) (Homo sapiens (Human)).